The primary structure comprises 919 residues: Isoleucine--tRNA ligase (919 aa).

A 'HIGH' region motif is present at residues 57–67 (PYANGDIHMGT). Residue Glu552 participates in L-isoleucyl-5'-AMP binding. The 'KMSKS' region signature appears at 593 to 597 (KMSKS). An ATP-binding site is contributed by Lys596. 4 residues coordinate Zn(2+): Cys886, Cys889, Cys906, and Cys909.

The protein belongs to the class-I aminoacyl-tRNA synthetase family. IleS type 1 subfamily. In terms of assembly, monomer. Zn(2+) serves as cofactor.

It localises to the cytoplasm. The enzyme catalyses tRNA(Ile) + L-isoleucine + ATP = L-isoleucyl-tRNA(Ile) + AMP + diphosphate. In terms of biological role, catalyzes the attachment of isoleucine to tRNA(Ile). As IleRS can inadvertently accommodate and process structurally similar amino acids such as valine, to avoid such errors it has two additional distinct tRNA(Ile)-dependent editing activities. One activity is designated as 'pretransfer' editing and involves the hydrolysis of activated Val-AMP. The other activity is designated 'posttransfer' editing and involves deacylation of mischarged Val-tRNA(Ile). This chain is Isoleucine--tRNA ligase, found in Petrotoga mobilis (strain DSM 10674 / SJ95).